The primary structure comprises 185 residues: Ribosome-recycling factor (185 aa).

The protein belongs to the RRF family.

The protein localises to the cytoplasm. Its function is as follows. Responsible for the release of ribosomes from messenger RNA at the termination of protein biosynthesis. May increase the efficiency of translation by recycling ribosomes from one round of translation to another. The protein is Ribosome-recycling factor of Aliivibrio fischeri (strain ATCC 700601 / ES114) (Vibrio fischeri).